Consider the following 448-residue polypeptide: Pre-mRNA-splicing factor SAD1 (448 aa).

Met-1 bears the N-acetylmethionine mark. The UBP-type; degenerate zinc-finger motif lies at 27–124 (PNYAYLETVV…NSIKFAAYPT (98 aa)). Positions 60, 63, 79, and 85 each coordinate Zn(2+). A USP domain is found at 150-447 (IGFTNAATYD…ETFIQVWEKQ (298 aa)).

Component of the 45S U1.U2.U4/U6.U5 penta-snRNP particle, a subcomplex of the spliceosome.

The protein resides in the nucleus. Functionally, promotes the assembly of newly synthesized U4 snRNA into the U4/U6 snRNP particle. Required for splicing of pre-mRNA. The polypeptide is Pre-mRNA-splicing factor SAD1 (SAD1) (Saccharomyces cerevisiae (strain ATCC 204508 / S288c) (Baker's yeast)).